Here is a 111-residue protein sequence, read N- to C-terminus: Ribosome-binding factor A (111 aa).

It belongs to the RbfA family. As to quaternary structure, monomer. Binds 30S ribosomal subunits, but not 50S ribosomal subunits or 70S ribosomes.

It localises to the cytoplasm. In terms of biological role, one of several proteins that assist in the late maturation steps of the functional core of the 30S ribosomal subunit. Associates with free 30S ribosomal subunits (but not with 30S subunits that are part of 70S ribosomes or polysomes). Required for efficient processing of 16S rRNA. May interact with the 5'-terminal helix region of 16S rRNA. This is Ribosome-binding factor A from Helicobacter acinonychis (strain Sheeba).